A 248-amino-acid polypeptide reads, in one-letter code: NADP-dependent 3-hydroxy acid dehydrogenase YdfG (248 aa).

Residues 7-12, 32-33, 54-55, and Asn-81 contribute to the NADP(+) site; these read GATAGF, RR, and DV. Residue Ser-134 coordinates substrate. NADP(+) is bound by residues Tyr-147, Lys-151, and 177–185; that span reads PGLVGGTEF. Tyr-147 (proton acceptor) is an active-site residue.

Belongs to the short-chain dehydrogenases/reductases (SDR) family. In terms of assembly, homotetramer.

It carries out the reaction 3-hydroxypropanoate + NADP(+) = 3-oxopropanoate + NADPH + H(+). The enzyme catalyses L-allo-threonine + NADP(+) = aminoacetone + CO2 + NADPH. Functionally, NADP-dependent dehydrogenase with broad substrate specificity acting on 3-hydroxy acids. Catalyzes the NADP-dependent oxidation of L-allo-threonine to L-2-amino-3-keto-butyrate, which is spontaneously decarboxylated into aminoacetone. Also acts on D-threonine, L-serine, D-serine, D-3-hydroxyisobutyrate, L-3-hydroxyisobutyrate, D-glycerate and L-glycerate. Able to catalyze the reduction of the malonic semialdehyde to 3-hydroxypropionic acid. YdfG is apparently supplementing RutE, the presumed malonic semialdehyde reductase involved in pyrimidine degradation since both are able to detoxify malonic semialdehyde. This Salmonella typhi protein is NADP-dependent 3-hydroxy acid dehydrogenase YdfG.